The chain runs to 543 residues: Protein DETOXIFICATION 47, chloroplastic (543 aa).

The N-terminal 30 residues, methionine 1–valine 30, are a transit peptide targeting the chloroplast. Positions valine 55–serine 94 form a coiled coil. 12 consecutive transmembrane segments (helical) span residues glycine 107–isoleucine 127, leucine 135–leucine 155, valine 181–glycine 201, glycine 228–lysine 248, alanine 256–glycine 276, glycine 278–methionine 298, leucine 319–phenylalanine 339, phenylalanine 342–alanine 362, isoleucine 406–phenylalanine 426, leucine 443–threonine 463, phenylalanine 472–threonine 492, and glycine 497–leucine 517.

This sequence belongs to the multi antimicrobial extrusion (MATE) (TC 2.A.66.1) family. As to expression, preferentially expressed in the epidermal cells.

It localises to the plastid. The protein localises to the chloroplast membrane. In terms of biological role, functions as a multidrug and toxin extrusion transporter in the export of salicylic acid (SA) from the chloroplast to the cytoplasm. Plays an essential function in plant defense via the pathogen-induced salicylic acid (SA) accumulation. Also acts as a key component of the Age-related resistance (ARR) pathway. This is Protein DETOXIFICATION 47, chloroplastic from Arabidopsis thaliana (Mouse-ear cress).